Consider the following 142-residue polypeptide: MKIINILFCLFLLMLNSCNSNDTNTSQTKSRQKRDLTQKEATQEKPKSKEDLLREKLSEDQKTHLDWLKTALTGAGEFDKFLGYDEDKIKGALNHIKSELDKCTGDNSEQQKSTFKEVVKGALGGGIDSFATSASSTCQAQQ.

The N-terminal stretch at 1-17 is a signal peptide; the sequence is MKIINILFCLFLLMLNS. Residue Cys-18 is the site of N-palmitoyl cysteine attachment. A lipid anchor (S-diacylglycerol cysteine) is attached at Cys-18. Residues 22 to 54 form a disordered region; it reads DTNTSQTKSRQKRDLTQKEATQEKPKSKEDLLR. Residues 33–54 are compositionally biased toward basic and acidic residues; it reads KRDLTQKEATQEKPKSKEDLLR.

Belongs to the Multicopy lipoprotein (Mlp) family.

Its subcellular location is the cell outer membrane. An outer membrane protein that may participate in pathogenesis. Some human Lyme disease patients have antibodies against this protein. The Mlp proteins probably undergo intragenic recombination, generating new alleles. The chain is Lipoprotein MlpI from Borreliella burgdorferi (strain ATCC 35210 / DSM 4680 / CIP 102532 / B31) (Borrelia burgdorferi).